Reading from the N-terminus, the 351-residue chain is DNA polymerase IV (351 aa).

One can recognise a UmuC domain in the interval 4–185 (IIHVDMDCFF…LPLAKIPGVG (182 aa)). Residues aspartate 8 and aspartate 103 each contribute to the Mg(2+) site. Glutamate 104 is an active-site residue.

The protein belongs to the DNA polymerase type-Y family. Monomer. The cofactor is Mg(2+).

It localises to the cytoplasm. The catalysed reaction is DNA(n) + a 2'-deoxyribonucleoside 5'-triphosphate = DNA(n+1) + diphosphate. Functionally, poorly processive, error-prone DNA polymerase involved in untargeted mutagenesis. Copies undamaged DNA at stalled replication forks, which arise in vivo from mismatched or misaligned primer ends. These misaligned primers can be extended by PolIV. Exhibits no 3'-5' exonuclease (proofreading) activity. May be involved in translesional synthesis, in conjunction with the beta clamp from PolIII. The sequence is that of DNA polymerase IV from Escherichia coli O157:H7.